The chain runs to 131 residues: Large ribosomal subunit protein bL12 (131 aa).

Belongs to the bacterial ribosomal protein bL12 family. As to quaternary structure, homodimer. Part of the ribosomal stalk of the 50S ribosomal subunit. Forms a multimeric L10(L12)X complex, where L10 forms an elongated spine to which 2 to 4 L12 dimers bind in a sequential fashion. Binds GTP-bound translation factors.

Forms part of the ribosomal stalk which helps the ribosome interact with GTP-bound translation factors. Is thus essential for accurate translation. This is Large ribosomal subunit protein bL12 from Tropheryma whipplei (strain Twist) (Whipple's bacillus).